The chain runs to 294 residues: Acetylglutamate kinase (294 aa).

Substrate contacts are provided by residues 63–64 (GG), Arg85, and Asn188.

The protein belongs to the acetylglutamate kinase family. ArgB subfamily.

It is found in the cytoplasm. It catalyses the reaction N-acetyl-L-glutamate + ATP = N-acetyl-L-glutamyl 5-phosphate + ADP. Its pathway is amino-acid biosynthesis; L-arginine biosynthesis; N(2)-acetyl-L-ornithine from L-glutamate: step 2/4. Its function is as follows. Catalyzes the ATP-dependent phosphorylation of N-acetyl-L-glutamate. The chain is Acetylglutamate kinase from Methanococcus vannielii (strain ATCC 35089 / DSM 1224 / JCM 13029 / OCM 148 / SB).